Consider the following 723-residue polypeptide: MPFSGLFSKSRSSSTRLEGWSLRNILPDSYFKCRNPSASSPSLSLNTLLAGMYASAASCFICTRGCTSGAAPPCNRAKPSLSASSLTTEAGRGFICRKTGCICNGANESAIDSLFVLQNALDCARLTGQTPYTVEVFRPIRNIFNRVREYTRASTTSVGLAWMSKYIYQYHRLMLMNLSPREPATEGWPLFLYPPPHLLVGYQYLVRTCNDYVFDTRSYSRLKYTEIHLPLQQKLNWTVMANCSYTINTGAYHRFIDFENFEETLAQVQQAVLAERVVADLALIRPMRGYGTTNMAGDRQVPVEGLLQDHYKNLSQCQNHAWGLADRMRIQNAGNKDIVILTTIRKLKTAFFNFLVSPRNPHTILSLPCDCLWLDAFMQKFTDPTLSQFQTIQSLPSQSVTKSIISALSLPGPAPCTPLSGGAFELRPRENGRAVTEEMRRRRGEMIERFIDRLPMRRRRRRAPPPPPMSEELSEPEVEAFPPASPPRRSFEEEVRDTIVEAIRLLQEELTVSARNEQFFNFAINFYEVIQRLEMLGNINELTIRRWVMYFFVAEHVATTLNYLHHNLRLYPPCSRWVDLELAQVVMRARDHEGQVVYSRVWNEMGENAFSQLMARVSGDLAATVERAGLGELEEEEMEQFMADIAYHENSGDVSEILRQVAINDTEVDSMELSFRFKVTGPVVFSQNRQIQSINRRVVALASQLRMQHRPLPAQHEQVQLPP.

A Nuclear localization signal motif is present at residues 453–462 (RLPMRRRRRR). The segment at 457–492 (RRRRRRAPPPPPMSEELSEPEVEAFPPASPPRRSFE) is disordered. An O-(5'-phospho-DNA)-serine modification is found at S651.

It belongs to the adenoviridae terminal protein family. Heterodimer with the polymerase; this heterodimer binds to bp 9 to 18 of the genome. Interacts with host POU2F1; POU2F1 binds to the auxiliary sequences in the inverted terminal repeats and tethers the pTP-POL heterodimer to the origin DNA thereby participating in the assembly of the pre-initiation complex (POL-TP-DBP-NFIA-POU2F1). In terms of processing, preterminal protein is used to replicate viral genome, upon genomic encapsidation it is processed first into iTP and finally into TP by adenovirus protease.

It localises to the host nucleus matrix. Its function is as follows. Protein covalently bound to the viral DNA that acts as a primer for viral genomic replication by DNA strand displacement. Assembles on the viral origin of replication in an initiation complex with viral polymerase, DBP, host NFIA and host POU2F1/OCT1. During initiation, the polymerase covalently couples the first dCTP with Ser-580 of pTP. The terminal protein stimulates the template activity over 20 fold compared to protein-free templates. Neo-synthesized viral genomes are linked to two preterminal proteins, one for each 5' end. These new genomes are encapsidated in the nucleus, and during capsid maturation by viral protease, preterminal protein is first cleaved into intermediary (iTP), then into mature TP. May play a role in host nuclear matrix localization of genomic DNA. The chain is Preterminal protein from Canis lupus familiaris (Dog).